The chain runs to 282 residues: Elongation factor Ts (282 aa).

The interval 80-83 is involved in Mg(2+) ion dislocation from EF-Tu; the sequence is TDFV.

This sequence belongs to the EF-Ts family.

Its subcellular location is the cytoplasm. Functionally, associates with the EF-Tu.GDP complex and induces the exchange of GDP to GTP. It remains bound to the aminoacyl-tRNA.EF-Tu.GTP complex up to the GTP hydrolysis stage on the ribosome. The sequence is that of Elongation factor Ts from Chlamydia trachomatis serovar L2 (strain ATCC VR-902B / DSM 19102 / 434/Bu).